Here is a 931-residue protein sequence, read N- to C-terminus: Short transient receptor potential channel 6 (931 aa).

Positions 1-24 (MNQSPAAFGPRRGGSPAVVAGAGA) are disordered. The Cytoplasmic segment spans residues 1–406 (MNQSPAAFGP…GLRQQTMAVK (406 aa)). Over residues 13–24 (GGSPAVVAGAGA) the composition is skewed to low complexity. ANK repeat units lie at residues 131 to 160 (MGQN…LSRV), 162 to 188 (DALL…FAEG), and 217 to 246 (HDVT…RIER). Residues 407 to 427 (FLVVLAVAVGLPFLALVYWFA) form a helical membrane-spanning segment. The Extracellular portion of the chain corresponds to 428 to 438 (PCSKMGKIMRG). Residues 439–459 (PFMKFVAHAASFTIFLGLLVM) form a helical membrane-spanning segment. The Cytoplasmic portion of the chain corresponds to 460-487 (NAADRFEGTKILPNETSTDHAKQLFRMK). Residues 488-508 (TSCFSWMEMLIISWVIGMIWA) form a helical membrane-spanning segment. The Extracellular portion of the chain corresponds to 509–521 (ECKEIWTQGPKEY). A helical membrane pass occupies residues 522-542 (LFELWNMLDFGMLAIFAASFI). The Cytoplasmic portion of the chain corresponds to 543 to 592 (ARFMAFWHASKAQSIIDANDTLKDLTKVTLGDNVKYYNLARIKWDPSDPQ). The chain crosses the membrane as a helical span at residues 593–613 (IISEGLYAIAVVLSFSRIAYI). Over 614–636 (LPANESFGPLQISLGRTVKDIFK) the chain is Extracellular. Residue Asn-617 is glycosylated (N-linked (GlcNAc...) asparagine). An ANK 4 repeat occupies 618 to 647 (ESFGPLQISLGRTVKDIFKFMVIFIMVFVA). A helical membrane pass occupies residues 637 to 657 (FMVIFIMVFVAFMIGMFNLYS). Residues 658–674 (YYIGAKQNEAFTTVEES) are Cytoplasmic-facing. A helical transmembrane segment spans residues 675 to 695 (FKTLFWAIFGLSEVKSVVINY). The Extracellular segment spans residues 696 to 706 (NHKFIENIGYV). The chain crosses the membrane as a helical span at residues 707–727 (LYGVYNVTMVIVLLNMLIAMI). Residues 728 to 931 (NSSFQEIEDD…MEPNQEESNR (204 aa)) are Cytoplasmic-facing. The residue at position 815 (Ser-815) is a Phosphoserine.

It belongs to the transient receptor (TC 1.A.4) family. STrpC subfamily. TRPC6 sub-subfamily. In terms of assembly, homodimer; forms channel complex. Interacts with MX1 and RNF24. Post-translationally, phosphorylated by FYN, leading to an increase of TRPC6 channel activity.

The protein localises to the cell membrane. It carries out the reaction Ca(2+)(in) = Ca(2+)(out). In terms of biological role, thought to form a receptor-activated non-selective calcium permeant cation channel. Probably is operated by a phosphatidylinositol second messenger system activated by receptor tyrosine kinases or G-protein coupled receptors. Activated by diacylglycerol (DAG) in a membrane-delimited fashion, independently of protein kinase C. Seems not to be activated by intracellular calcium store depletion. This Bos taurus (Bovine) protein is Short transient receptor potential channel 6.